The sequence spans 423 residues: Glycine amidinotransferase, mitochondrial (423 aa).

The N-terminal 43 residues, 1 to 43 (MLRVRCLRGGSRGAEAVHYIGSRLGRTLTGWVQRTFQSTQAAT), are a transit peptide targeting the mitochondrion. The tract at residues 43–63 (TASSRNSFAADDKATEPLPKD) is disordered. Ser46 and Ser49 each carry phosphoserine. A compositionally biased stretch (basic and acidic residues) spans 52-61 (ADDKATEPLP). Asp170 contacts arginine. Catalysis depends on residues Asp254 and His303. Arginine contacts are provided by Asp305, Arg322, Ser354, and Ser355. Lys385 carries the N6-acetyllysine modification. Catalysis depends on Cys407, which acts as the Amidino-cysteine intermediate.

Belongs to the amidinotransferase family. As to quaternary structure, homodimer.

The protein localises to the mitochondrion inner membrane. It catalyses the reaction L-arginine + glycine = guanidinoacetate + L-ornithine. The catalysed reaction is 4-aminobutanoate + L-arginine = 4-guanidinobutanoate + L-ornithine. It carries out the reaction beta-alanine + L-arginine = 3-guanidinopropanoate + L-ornithine. The enzyme catalyses taurine + L-arginine = taurocyamine + L-ornithine. It participates in amine and polyamine biosynthesis; creatine biosynthesis; creatine from L-arginine and glycine: step 1/2. In terms of biological role, transamidinase that catalyzes the transfer of the amidino group of L-arginine onto the amino moiety of acceptor metabolites such as glycine, beta-alanine, gamma-aminobutyric acid (GABA) and taurine yielding the corresponding guanidine derivatives. Catalyzes the rate-limiting step of creatine biosynthesis, namely the transfer of the amidino group from L-arginine to glycine to generate guanidinoacetate, which is then methylated by GAMT to form creatine. Provides creatine as a source for ATP generation in tissues with high energy demands, in particular skeletal muscle, heart and brain. This Macaca fascicularis (Crab-eating macaque) protein is Glycine amidinotransferase, mitochondrial (GATM).